The following is a 346-amino-acid chain: 3 beta-hydroxysteroid dehydrogenase/Delta 5--&gt;4-isomerase (346 aa).

Catalysis depends on Tyr147, which acts as the Proton acceptor. Lys151 is a binding site for NAD(+).

The protein belongs to the 3-beta-HSD family.

It carries out the reaction a 3beta-hydroxy-Delta(5)-steroid + NAD(+) = a 3-oxo-Delta(5)-steroid + NADH + H(+). The catalysed reaction is a 3-oxo-Delta(5)-steroid = a 3-oxo-Delta(4)-steroid. The protein operates within lipid metabolism; steroid biosynthesis. In terms of biological role, catalyzes the oxidative conversion of Delta(5)-ene-3-beta-hydroxy steroid, and the oxidative conversion of ketosteroids. The 3-beta-HSD enzymatic system plays a crucial role in the biosynthesis of all classes of hormonal steroids. During viral infection, steroid production contributes to virulence by inhibiting the host inflammatory response. This Monkeypox virus protein is 3 beta-hydroxysteroid dehydrogenase/Delta 5--&gt;4-isomerase (OPG174).